We begin with the raw amino-acid sequence, 953 residues long: MNQEYIKVRGAKEHNLKNINVDIPRNKFVVITGLSGSGKSSLAFDTIYAEGQRRYVESLSSYARQFLHLQNKPNVESISGLSPAIAIDQKTTSKNPRSTVGTITEIYDYLRLLYARVGIPYSPVTSLPIHSQTVAEMVDIINELPKGTKVYLLAPIVRGHKGEFKREIMNLKKQGFQKLIVNGEVCEIDDLPKLDKNKKHNIEVIVDRIVLDENLGNRLADSLESSLNLADGITYLEIVELPQAVKSQFEKNQRITFSEKYSCPVSGFQLTEIEPRIFSFNSPFGACPKCEGIGKEFFFDRDLIVQDQRISIKDGAIVPWGSTSSKFILETLKALADHYKFSIEVPFISLSQSVKDILFEGSGEEEIKFEFHDGSKTQIIKQPFAGIIPSLQEKDRTIESVLIKEELAKFKSEHKCTACSGFRLKDEALCVKIANLHIGEVAGMSIAALQKWFIHLEEKLNQKQLFIAKRILKEINERLKFLMNVGLDYLTLSREAGTLSGGESQRIRLASQIGSGLSGVLYVLDEPSIGLHQRDNTRLIATLKRLRDLGNTVLVVEHDEETMYEADHIIDIGPGAGIHGGRVIAEGNAEKIKHFEESITGRYLSGRQTIKVPSETRVGHDNRAIELLGAVSNNLDNVDIKIPLGTFTAITGVSGSGKSSLMIHTLYKAALKHLEPTSKVFPGKYRELKGLEYIDKIIDINQSPIGRTPRSNPATYTGAFTHIRDWFVELPESKARGYKVGRFSFNVKGGRCEACQGDGLIKIEMHFLPDVYVKCDICNGHRYNRETLEIKYKGKSIADILMMTVEDAMQFFDKIPLIYEKLITLNEVGLGYIKIGQSATTLSGGEAQRVKLAKELSRRSTGKTLYILDEPTTGLHIDDIKKLLKVLHKLVDMGNTVLVIEHNLDVIKTADYIIDVGPEGGDKGGKIVVCGTPTDIAACKESHTGRYLKQYLI.

Gly-33–Ser-40 provides a ligand contact to ATP. 2 consecutive ABC transporter domains span residues Trp-320–Ile-599 and Gly-619–Lys-949. Gly-652–Ser-659 is a binding site for ATP. Residues Cys-752–Cys-778 form a C4-type zinc finger.

It belongs to the ABC transporter superfamily. UvrA family. In terms of assembly, forms a heterotetramer with UvrB during the search for lesions.

The protein localises to the cytoplasm. The UvrABC repair system catalyzes the recognition and processing of DNA lesions. UvrA is an ATPase and a DNA-binding protein. A damage recognition complex composed of 2 UvrA and 2 UvrB subunits scans DNA for abnormalities. When the presence of a lesion has been verified by UvrB, the UvrA molecules dissociate. The chain is UvrABC system protein A from Rickettsia prowazekii (strain Madrid E).